The primary structure comprises 370 residues: 2-Hydroxyacid oxidase 1 (370 aa).

One can recognise an FMN hydroxy acid dehydrogenase domain in the interval Met1–Leu365. Tyr26 contacts glyoxylate. Residues Ala79 to Ala81, Ser108, and Gln130 each bind FMN. Tyr132 serves as a coordination point for glyoxylate. Thr158 contacts FMN. Arg167 contacts glyoxylate. The residue at position 184 (Lys184) is an N6-succinyllysine. Residues Ser194 and Ser230 each carry the phosphoserine modification. Lys236 and Ser258 together coordinate FMN. 2 residues coordinate glyoxylate: His260 and Arg263. His260 acts as the Proton acceptor in catalysis. FMN-binding positions include Asp291 to Arg295 and Gly314 to Arg315. The Microbody targeting signal signature appears at Ser368–Ile370.

It belongs to the FMN-dependent alpha-hydroxy acid dehydrogenase family. In terms of assembly, homotetramer. It depends on FMN as a cofactor. As to expression, liver.

It is found in the peroxisome matrix. The catalysed reaction is a (2S)-2-hydroxycarboxylate + O2 = a 2-oxocarboxylate + H2O2. It catalyses the reaction glycolate + O2 = glyoxylate + H2O2. The enzyme catalyses glyoxylate + O2 + H2O = oxalate + H2O2 + H(+). It carries out the reaction 2-hydroxyhexadecanoate + O2 = 2-oxohexadecanoate + H2O2. The catalysed reaction is 2-hydroxyoctanoate + O2 = 2-oxooctanoate + H2O2. The protein operates within amino-acid biosynthesis; glycine biosynthesis. Its function is as follows. Broad substrate specificity (S)-2-hydroxy-acid oxidase that preferentially oxidizes glycolate. The glyoxylate produced by the oxidation of glycolate can then be utilized by alanine-glyoxylate aminotransferase for the peroxisomal synthesis of glycine; this pathway appears to be an important step for the detoxification of glyoxylate which, if allowed to accumulate, may be metabolized to oxalate with formation of kidney stones. Can also catalyze the oxidation glyoxylate, and long chain hydroxyacids such as 2-hydroxyhexadecanoate and 2-hydroxyoctanoate. Active in vitro with the artificial electron acceptor 2,6-dichlorophenolindophenol (DCIP), but O2 is believed to be the physiological electron acceptor, leading to the production of H2O2. The protein is 2-Hydroxyacid oxidase 1 of Mus musculus (Mouse).